A 345-amino-acid chain; its full sequence is MSTTTDFVGRNCPHCSAVDSLQTDDVMGEVACTACALVVAMGLEENVFTRYNENATYEDVDHHRERNANPTAATSAAGSLSAADPHMSSTSSKVVLHPTMLNCMRGLHKKAVLPEPVLDRGIELARAFVGGRRARGQRVERQPDVAAACLMIAAEEAQQPLPLAEVRCLDSSLGDVELRRADIVRELHLEDSERRLRDTFADNLLVKYILKLGLQVSLYLPHCKRLLTALGRVEALAGLTVADRVTTALLLARTAQTLSWEQGTHISKGKECDLGMEAIYANFSSKAHLEVTKVNKIMHLAVDVLPLIQAAFQDCGEPTAGKRKVDKNSEPEASGGTKRVKREET.

A TFIIB-type zinc finger spans residues 8–40 (VGRNCPHCSAVDSLQTDDVMGEVACTACALVVA). Zn(2+) contacts are provided by Cys12, Cys15, Cys32, and Cys35. Disordered stretches follow at residues 59–89 (DVDH…HMSS) and 318–345 (PTAG…REET). Over residues 71 to 83 (TAATSAAGSLSAA) the composition is skewed to low complexity.

This sequence belongs to the TFIIB family. Monomer. Interacts with RNA polymerase II subunits RPB1 and RPB2. Interacts with TBP; the interaction is direct.

The protein localises to the nucleus. Specifically binds to the promoter of the spliced leader (SL) RNA gene and thus is essential for SLRNA transcription. The polypeptide is Transcription initiation factor IIB (Trypanosoma brucei brucei).